A 952-amino-acid chain; its full sequence is Probable mixed-linked glucan synthase 6 (952 aa).

A run of 2 helical transmembrane segments spans residues 102-122 and 132-152; these read LLHP…LFVI and AMWL…SWLL. Aspartate 227 is an active-site residue. A coiled-coil region spans residues 278–308; sequence EEFVNDRRRVRKEYDDFKARINGLEHDIKQR. Residues aspartate 429 and aspartate 431 each coordinate substrate. Residue aspartate 636 is part of the active site. Helical transmembrane passes span 718–738, 744–764, 782–802, 834–854, 865–885, and 898–918; these read LFLI…HFIV, MFYV…VLEV, MTAS…KVVF, WLMI…AVAF, WLKV…LYPF, and VVVL…YINI.

Belongs to the glycosyltransferase 2 family. Plant cellulose synthase-like F subfamily.

It is found in the golgi apparatus membrane. Functionally, may catalyze both beta-1,3 and beta-1,4 glycosidic linkage on beta-D-glucan. Essential for (1,3;1,4)-beta-D-glucans synthesis in grasses and cereals (Poaceae). The mixed-linked glucans (which are not present in walls of dicotyledons or most other monocotyledonous plants) are particularly important constituents of the walls of the starchy endosperm and aleurone cells of cereal grains such as oats, wheat, rice and barley. They can account for up to 70% by weight of the wall. The sequence is that of Probable mixed-linked glucan synthase 6 (CSLF6) from Oryza sativa subsp. japonica (Rice).